The following is a 40-amino-acid chain: Bomanin Short 6 (40 aa).

Positions 1–18 are cleaved as a signal peptide; the sequence is MKLLSITFLFGLLALASA. The propeptide at 19-23 is removed by a dipeptidylpeptidase; that stretch reads NPLSP. Cys-32 and Cys-35 are joined by a disulfide.

This sequence belongs to the bomanin family.

Its subcellular location is the secreted. In terms of biological role, secreted immune-induced peptide induced by Toll signaling. Has a role in resistance to bacterial and fungal infections. The strength of antimicrobial activity appears to correlate with the overall level of expression. The sequence is that of Bomanin Short 6 from Drosophila melanogaster (Fruit fly).